Consider the following 680-residue polypeptide: DNA ligase (680 aa).

NAD(+) contacts are provided by residues 32–36, 81–82, and E115; these read DAVYD and SL. Residue K117 is the N6-AMP-lysine intermediate of the active site. NAD(+) contacts are provided by R138, E175, K291, and K315. Zn(2+)-binding residues include C409, C412, C427, and C432. The 81-residue stretch at 600-680 folds into the BRCT domain; that stretch reads ASEQHLKGLT…RLQAMLKDSP (81 aa).

The protein belongs to the NAD-dependent DNA ligase family. LigA subfamily. Mg(2+) is required as a cofactor. It depends on Mn(2+) as a cofactor.

It carries out the reaction NAD(+) + (deoxyribonucleotide)n-3'-hydroxyl + 5'-phospho-(deoxyribonucleotide)m = (deoxyribonucleotide)n+m + AMP + beta-nicotinamide D-nucleotide.. Its function is as follows. DNA ligase that catalyzes the formation of phosphodiester linkages between 5'-phosphoryl and 3'-hydroxyl groups in double-stranded DNA using NAD as a coenzyme and as the energy source for the reaction. It is essential for DNA replication and repair of damaged DNA. In Synechococcus sp. (strain CC9902), this protein is DNA ligase.